A 1442-amino-acid polypeptide reads, in one-letter code: Trafficking protein particle complex subunit 10 (1442 aa).

Over residues 1–23 (MSNVSPNSMNLNGSTSSTASVND) the composition is skewed to polar residues. Disordered regions lie at residues 1-86 (MSNV…SSSS), 251-277 (TSSG…TSTK), 535-564 (GSSS…NSGI), 1208-1238 (LSSS…NHSK), 1316-1335 (QQQQ…QKQQ), and 1422-1442 (LQDN…TNKT). Residues 39–86 (SSSSASSISNSNSSSSNNLKPSTQPLSSSSTLNTPTQFSLQHSSSSSS) show a composition bias toward low complexity. Residues 535-553 (GSSSSNTPSSTSATTAANG) show a composition bias toward low complexity. Residues 554-564 (KNTPMPSNSGI) are compositionally biased toward polar residues. The segment covering 1208 to 1236 (LSSSTSPSSATDSSNSNGNNNNNNNNNNH) has biased composition (low complexity). Positions 1425 to 1442 (NNNNNNNSINSQTSTNKT) are enriched in low complexity.

Belongs to the TMEM1 family. In terms of assembly, part of the multisubunit TRAPP (transport protein particle) complex.

The protein localises to the golgi apparatus. It is found in the cis-Golgi network. Functionally, may play a role in vesicular transport from endoplasmic reticulum to Golgi. In Dictyostelium discoideum (Social amoeba), this protein is Trafficking protein particle complex subunit 10 (trapcc10-1).